Consider the following 107-residue polypeptide: U1-lycotoxin-Ls1x (107 aa).

The first 20 residues, 1 to 20, serve as a signal peptide directing secretion; it reads MMKVLVVVALLVTLISYSSS. The propeptide occupies 21 to 41; the sequence is EGIDDLEADELLSLMANEHPR. Intrachain disulfides connect Cys-44/Cys-59, Cys-51/Cys-68, Cys-58/Cys-86, and Cys-70/Cys-84.

It belongs to the neurotoxin 19 (CSTX) family. 04 (U1-Lctx) subfamily. Expressed by the venom gland.

The protein localises to the secreted. The chain is U1-lycotoxin-Ls1x from Lycosa singoriensis (Wolf spider).